Consider the following 216-residue polypeptide: 3-keto-L-gulonate-6-phosphate decarboxylase UlaD (216 aa).

Asp11 lines the substrate pocket. Residues Glu33 and Asp62 each coordinate Mg(2+). Arg192 contributes to the substrate binding site.

It belongs to the HPS/KGPDC family. KGPDC subfamily. Homodimer. It depends on Mg(2+) as a cofactor.

The catalysed reaction is 3-dehydro-L-gulonate 6-phosphate + H(+) = L-xylulose 5-phosphate + CO2. The protein operates within cofactor degradation; L-ascorbate degradation; D-xylulose 5-phosphate from L-ascorbate: step 2/4. Functionally, catalyzes the decarboxylation of 3-keto-L-gulonate-6-P into L-xylulose-5-P. Is involved in the anaerobic L-ascorbate utilization. The polypeptide is 3-keto-L-gulonate-6-phosphate decarboxylase UlaD (Escherichia fergusonii (strain ATCC 35469 / DSM 13698 / CCUG 18766 / IAM 14443 / JCM 21226 / LMG 7866 / NBRC 102419 / NCTC 12128 / CDC 0568-73)).